Consider the following 205-residue polypeptide: Delta-aminolevulinic acid dehydratase (205 aa).

Residues Cys-117, Cys-119, and Cys-127 each contribute to the Zn(2+) site. The Schiff-base intermediate with substrate role is filled by Lys-192. Residue Arg-202 participates in substrate binding.

The protein belongs to the ALAD family. Homooctamer. Zn(2+) is required as a cofactor.

The enzyme catalyses 2 5-aminolevulinate = porphobilinogen + 2 H2O + H(+). The protein operates within porphyrin-containing compound metabolism; protoporphyrin-IX biosynthesis; coproporphyrinogen-III from 5-aminolevulinate: step 1/4. Catalyzes an early step in the biosynthesis of tetrapyrroles. Binds two molecules of 5-aminolevulinate per subunit, each at a distinct site, and catalyzes their condensation to form porphobilinogen. The polypeptide is Delta-aminolevulinic acid dehydratase (hemB) (Ruminiclostridium josui (Clostridium josui)).